A 101-amino-acid chain; its full sequence is Ubiquitin-related modifier 1 homolog (101 aa).

Gly101 is modified (1-thioglycine). Gly101 participates in a covalent cross-link: Glycyl lysine isopeptide (Gly-Lys) (interchain with K-? in acceptor proteins).

It belongs to the URM1 family. In terms of assembly, interacts with cer. Post-translationally, C-terminal thiocarboxylation occurs in 2 steps, it is first acyl-adenylated (-COAMP) via the hesA/moeB/thiF part of the MOCS3 homolog, then thiocarboxylated (-COSH) via the rhodanese domain of the MOCS3 homolog.

Its subcellular location is the cytoplasm. The protein operates within tRNA modification; 5-methoxycarbonylmethyl-2-thiouridine-tRNA biosynthesis. In terms of biological role, acts as a sulfur carrier required for 2-thiolation of mcm(5)S(2)U at tRNA wobble positions of cytosolic tRNA(Lys), tRNA(Glu) and tRNA(Gln). Serves as sulfur donor in tRNA 2-thiolation reaction by being thiocarboxylated (-COSH) at its C-terminus by MOCS3. The sulfur is then transferred to tRNA to form 2-thiolation of mcm(5)S(2)U. Also acts as a ubiquitin-like protein (UBL) that is covalently conjugated via an isopeptide bond to lysine residues of target proteins such as Prx2/Jafrac1, Ciao1, Eip71CD and GILT1. The thiocarboxylated form serves as substrate for conjugation and oxidative stress specifically induces the formation of UBL-protein conjugates. The polypeptide is Ubiquitin-related modifier 1 homolog (Drosophila sechellia (Fruit fly)).